The primary structure comprises 1102 residues: ATP-dependent DNA helicase MPH1 (1102 aa).

The tract at residues 19–55 is disordered; that stretch reads ALDKPATSGLHSREQEQQRDISNATPHTSTDLELEDF. The span at 38–49 shows a compositional bias: polar residues; sequence DISNATPHTSTD. The Helicase ATP-binding domain occupies 147-315; that stretch reads IVKNGLFNNT…DVIDNLGVSH (169 aa). Residue 160 to 167 coordinates ATP; the sequence is LPTGLGKT. Positions 263-266 match the DEAH box motif; that stretch reads DEAH. In terms of domain architecture, Helicase C-terminal spans 490-651; the sequence is NLLNYFMDAG…GSRFNFRHDL (162 aa). Disordered regions lie at residues 672–702, 720–743, 818–837, and 858–1102; these read PIENTQDTSLPEPKARSTRGKKASKKKFNMP, ASKTKAKPNKSPKKAESKETDEIS, SQGIETRHTKPHGDTDKSRY, and SGRK…SESG. The span at 687-699 shows a compositional bias: basic residues; that stretch reads RSTRGKKASKKKF. Residues 822-837 are compositionally biased toward basic and acidic residues; that stretch reads ETRHTKPHGDTDKSRY. The span at 1003 to 1019 shows a compositional bias: low complexity; the sequence is SSGAASKSGSTASTAAK. The span at 1069–1082 shows a compositional bias: acidic residues; it reads SDDDDDDNDDEDDV.

It belongs to the DEAD box helicase family. DEAH subfamily. FANCM sub-subfamily. Interacts with the MHF histone-fold complex to form the FANCM-MHF complex.

Its subcellular location is the nucleus. The catalysed reaction is ATP + H2O = ADP + phosphate + H(+). In terms of biological role, ATP-dependent DNA helicase involved in DNA damage repair by homologous recombination and in genome maintenance. Capable of unwinding D-loops. Plays a role in limiting crossover recombinants during mitotic DNA double-strand break (DSB) repair. Component of a FANCM-MHF complex which promotes gene conversion at blocked replication forks, probably by reversal of the stalled fork. In Pyricularia oryzae (strain 70-15 / ATCC MYA-4617 / FGSC 8958) (Rice blast fungus), this protein is ATP-dependent DNA helicase MPH1.